A 279-amino-acid polypeptide reads, in one-letter code: Shikimate dehydrogenase (NADP(+)) (279 aa).

Shikimate contacts are provided by residues 19 to 21 (SRS) and Thr-66. Lys-70 serves as the catalytic Proton acceptor. Residues Asn-91 and Asp-106 each coordinate shikimate. Residues 129 to 133 (GAGGA) and Phe-222 contribute to the NADP(+) site. Residue Tyr-224 coordinates shikimate. Gly-243 lines the NADP(+) pocket.

The protein belongs to the shikimate dehydrogenase family. As to quaternary structure, homodimer.

It carries out the reaction shikimate + NADP(+) = 3-dehydroshikimate + NADPH + H(+). It functions in the pathway metabolic intermediate biosynthesis; chorismate biosynthesis; chorismate from D-erythrose 4-phosphate and phosphoenolpyruvate: step 4/7. In terms of biological role, involved in the biosynthesis of the chorismate, which leads to the biosynthesis of aromatic amino acids. Catalyzes the reversible NADPH linked reduction of 3-dehydroshikimate (DHSA) to yield shikimate (SA). The sequence is that of Shikimate dehydrogenase (NADP(+)) from Anaeromyxobacter sp. (strain Fw109-5).